We begin with the raw amino-acid sequence, 208 residues long: Elongation factor Ts, chloroplastic (208 aa).

It belongs to the EF-Ts family.

Its subcellular location is the plastid. It is found in the chloroplast. Associates with the EF-Tu.GDP complex and induces the exchange of GDP to GTP. It remains bound to the aminoacyl-tRNA.EF-Tu.GTP complex up to the GTP hydrolysis stage on the ribosome. The polypeptide is Elongation factor Ts, chloroplastic (tsf) (Cyanidium caldarium (Red alga)).